The primary structure comprises 318 residues: 2-oxoacid:ferredoxin oxidoreductase 1, subunit beta (318 aa).

[4Fe-4S] cluster is bound by residues cysteine 18, cysteine 21, and cysteine 52. Residues 50 to 53 (IGCS) and histidine 69 each bind thiamine diphosphate. A Mg(2+)-binding site is contributed by aspartate 94. 95-96 (GD) is a binding site for thiamine diphosphate. Residues asparagine 122 and valine 124 each contribute to the Mg(2+) site. 126-127 (GL) contacts thiamine diphosphate. Cysteine 201 lines the [4Fe-4S] cluster pocket.

As to quaternary structure, heterodimer composed of an alpha and a beta subunit. Requires [4Fe-4S] cluster as cofactor. It depends on thiamine diphosphate as a cofactor. The cofactor is Mg(2+).

The enzyme catalyses a 2-oxocarboxylate + 2 oxidized [2Fe-2S]-[ferredoxin] + CoA = an acyl-CoA + 2 reduced [2Fe-2S]-[ferredoxin] + CO2 + H(+). Functionally, catalyzes the coenzyme A-dependent oxidative decarboxylation of different 2-oxoacids such as pyruvate, 2-oxobutyrate and glyoxylate to form their CoA derivatives. This chain is 2-oxoacid:ferredoxin oxidoreductase 1, subunit beta, found in Aeropyrum pernix (strain ATCC 700893 / DSM 11879 / JCM 9820 / NBRC 100138 / K1).